The primary structure comprises 206 residues: Small ribosomal subunit protein uS4 (206 aa).

Positions 96-157 constitute an S4 RNA-binding domain; the sequence is SRLDNVVYRM…KAQKQLRVQA (62 aa).

This sequence belongs to the universal ribosomal protein uS4 family. Part of the 30S ribosomal subunit. Contacts protein S5. The interaction surface between S4 and S5 is involved in control of translational fidelity.

Functionally, one of the primary rRNA binding proteins, it binds directly to 16S rRNA where it nucleates assembly of the body of the 30S subunit. In terms of biological role, with S5 and S12 plays an important role in translational accuracy. This Alkalilimnicola ehrlichii (strain ATCC BAA-1101 / DSM 17681 / MLHE-1) protein is Small ribosomal subunit protein uS4.